Consider the following 152-residue polypeptide: Small ribosomal subunit protein uS11 (152 aa).

It belongs to the universal ribosomal protein uS11 family. As to quaternary structure, component of the small ribosomal subunit. Part of the small subunit (SSU) processome, composed of more than 70 proteins and the RNA chaperone small nucleolar RNA (snoRNA) U3.

Its subcellular location is the cytoplasm. The protein resides in the nucleus. The protein localises to the nucleolus. Its function is as follows. Component of the small ribosomal subunit. The ribosome is a large ribonucleoprotein complex responsible for the synthesis of proteins in the cell. Part of the small subunit (SSU) processome, first precursor of the small eukaryotic ribosomal subunit. During the assembly of the SSU processome in the nucleolus, many ribosome biogenesis factors, an RNA chaperone and ribosomal proteins associate with the nascent pre-rRNA and work in concert to generate RNA folding, modifications, rearrangements and cleavage as well as targeted degradation of pre-ribosomal RNA by the RNA exosome. The chain is Small ribosomal subunit protein uS11 (rps-14) from Caenorhabditis elegans.